We begin with the raw amino-acid sequence, 65 residues long: Large ribosomal subunit protein bL35 (65 aa).

Disordered regions lie at residues 1–23 (MPKL…GGFK) and 36–65 (MTTK…MPYA). Polar residues predominate over residues 54–65 (DTTSLVQQMPYA).

It belongs to the bacterial ribosomal protein bL35 family.

This chain is Large ribosomal subunit protein bL35, found in Francisella tularensis subsp. tularensis (strain FSC 198).